Here is a 346-residue protein sequence, read N- to C-terminus: Enkurin domain-containing protein 1 (346 aa).

3 disordered regions span residues 1–24 (MCEG…DYYR), 88–107 (SGVS…NLRR), and 113–132 (RRFQ…PLKA). Serine 91 is subject to Phosphoserine. Composition is skewed to basic and acidic residues over residues 98–107 (KDHEKENLRR) and 113–125 (RRFQ…REQG). Serine 136 carries the phosphoserine modification. In terms of domain architecture, Enkurin spans 251–343 (ERRDLWRKEA…IFSRPKVFVK (93 aa)). The interval 259-280 (EAEARQRSQPDPSMPPGHTLMP) is disordered.

Interacts with alpha-tubulin. Interacts (via central region) with CCP110 (via N-terminal region); competes with CEP97 for binding to CCP110. In terms of tissue distribution, widely expressed with highest levels in testis and lung.

The protein localises to the cytoplasm. The protein resides in the cytoskeleton. It is found in the microtubule organizing center. Its subcellular location is the centrosome. It localises to the centriole. The protein localises to the cilium basal body. The protein resides in the cell projection. It is found in the cilium. Its subcellular location is the spindle. It localises to the spindle pole. The protein localises to the cilium axoneme. Microtubule-binding protein which regulates microtubule organization and stability. Promotes the stability of astral microtubules and facilitates the proper orientation of the mitotic spindle. This allows the oriented division of basal keratinocytes and contributes to epidermal stratification. Required for the assembly of both primary and motile cilia. Destabilizes the interaction between CCP110 and CEP97 by competing with CEP97 for binding to CCP110 which promotes the removal of CCP110 and CEP97 from the mother centriole and allows the initiation of ciliogenesis. The chain is Enkurin domain-containing protein 1 (Enkd1) from Mus musculus (Mouse).